Reading from the N-terminus, the 1381-residue chain is Non-structural polyprotein 1AB (1381 aa).

A coiled-coil region spans residues 121–160 (VLVQEHKKLDSDLKESRRELSQLKLEHSLLRHDYERLVRE). 5 helical membrane passes run 169–189 (FKFS…MSAV), 249–269 (LALG…LVGT), 279–299 (LYML…VALA), 324–344 (AFAI…CLAM), and 365–385 (FSHL…AILI). Residues His477, Asp506, and Ser569 each act as charge relay system; for serine protease activity in the active site. Tyr694 bears the O-(5'-phospho-RNA)-tyrosine mark. The stretch at 703–732 (TRDQLREMAEAAREADDDFDDYEEEKNEVD) forms a coiled coil. Residues 856 to 879 (MQRKKQKPKKREEGPERGPINPDE) form a disordered region. Residues 1122–1254 (SVFIEFDWTR…TFDHVPPDYV (133 aa)) form the RdRp catalytic domain.

It belongs to the astroviridae polyprotein 1AB family. Monomer. Cleaved by the viral and host proteases. The protease is probably autocatalytically cleaved.

The protein localises to the host membrane. The enzyme catalyses RNA(n) + a ribonucleoside 5'-triphosphate = RNA(n+1) + diphosphate. Its function is as follows. Responsible for the cleavage of the polyprotein into functional products. In terms of biological role, protein covalently attached to the 5' extremity of the genomic and subgenomic RNAs. It may serve as a primer for the replicase. This is Non-structural polyprotein 1AB (ORF1) from Neovison vison (American mink).